Here is a 283-residue protein sequence, read N- to C-terminus: ATP phosphoribosyltransferase (283 aa).

This sequence belongs to the ATP phosphoribosyltransferase family. Long subfamily. Mg(2+) is required as a cofactor.

The protein resides in the cytoplasm. The catalysed reaction is 1-(5-phospho-beta-D-ribosyl)-ATP + diphosphate = 5-phospho-alpha-D-ribose 1-diphosphate + ATP. The protein operates within amino-acid biosynthesis; L-histidine biosynthesis; L-histidine from 5-phospho-alpha-D-ribose 1-diphosphate: step 1/9. With respect to regulation, feedback inhibited by histidine. Catalyzes the condensation of ATP and 5-phosphoribose 1-diphosphate to form N'-(5'-phosphoribosyl)-ATP (PR-ATP). Has a crucial role in the pathway because the rate of histidine biosynthesis seems to be controlled primarily by regulation of HisG enzymatic activity. The chain is ATP phosphoribosyltransferase from Bifidobacterium longum (strain NCC 2705).